The primary structure comprises 261 residues: UPF0328 protein ECU03_1620 (261 aa).

Belongs to the UPF0328 family.

This chain is UPF0328 protein ECU03_1620, found in Encephalitozoon cuniculi (strain GB-M1) (Microsporidian parasite).